The sequence spans 263 residues: 3'-5' ssDNA/RNA exonuclease TatD (263 aa).

A divalent metal cation is bound by residues Glu91, His127, and His152.

This sequence belongs to the metallo-dependent hydrolases superfamily. TatD-type hydrolase family. TatD subfamily. In terms of assembly, monomer. The cofactor is Mg(2+).

The protein resides in the cytoplasm. In terms of biological role, 3'-5' exonuclease that prefers single-stranded DNA and RNA. May play a role in the H(2)O(2)-induced DNA damage repair. This Citrobacter rodentium (strain ICC168) (Citrobacter freundii biotype 4280) protein is 3'-5' ssDNA/RNA exonuclease TatD.